A 650-amino-acid polypeptide reads, in one-letter code: Exonuclease 3'-5' domain-containing protein 2 (650 aa).

Residues 1–6 are Mitochondrial intermembrane-facing; it reads MSRQNL. A helical membrane pass occupies residues 7-29; the sequence is VALTVTTLLGVAMGGFVLWKGIQ. Residues 30–650 are Cytoplasmic-facing; the sequence is RRWSKTSRVM…YGDDLPIKLS (621 aa). The disordered stretch occupies residues 34–89; it reads KTSRVMQQQPQQPQQPQQPQPQPQPQPQPQPEHPQPQQQVPGGREWPPPEDDQLPF. Positions 49–67 are enriched in pro residues; the sequence is PQQPQPQPQPQPQPQPEHP. 3 residues coordinate a divalent metal cation: aspartate 137, glutamate 139, and aspartate 275. A 3'-5' exonuclease domain is found at 184 to 276; the sequence is ILADGAILKV…DQVTYAARDA (93 aa). Residues 340-373 are disordered; sequence SQLKPRNRKAKTDRMVPGNNQGRDPRKHKRKPLG.

The protein belongs to the EXD2 family. In terms of assembly, homodimer. Interacts with RBBP8, MRE11 and BRCA1. Requires Mg(2+) as cofactor. It depends on Mn(2+) as a cofactor.

Its subcellular location is the mitochondrion outer membrane. It is found in the mitochondrion matrix. It localises to the nucleus. The protein resides in the chromosome. It catalyses the reaction Exonucleolytic cleavage in the 3'- to 5'-direction to yield nucleoside 5'-phosphates.. Exonuclease that has both 3'-5' exoribonuclease and exodeoxyribonuclease activities, depending on the divalent metal cation used as cofactor. In presence of Mg(2+), only shows 3'-5' exoribonuclease activity, while it shows both exoribonuclease and exodeoxyribonuclease activities in presence of Mn(2+). Acts as an exoribonuclease in mitochondrion, possibly by regulating ATP production and mitochondrial translation. Also involved in the response to DNA damage. Acts as 3'-5' exodeoxyribonuclease for double-strand breaks resection and efficient homologous recombination. Plays a key role in controlling the initial steps of chromosomal break repair, it is recruited to chromatin in a damage-dependent manner and functionally interacts with the MRN complex to accelerate resection through its 3'-5' exonuclease activity, which efficiently processes double-stranded DNA substrates containing nicks. Also involved in response to replicative stress: recruited to stalled forks and is required to stabilize and restart stalled replication forks by restraining excessive fork regression, thereby suppressing their degradation. This is Exonuclease 3'-5' domain-containing protein 2 from Mus musculus (Mouse).